We begin with the raw amino-acid sequence, 201 residues long: Potassium-transporting ATPase KdpC subunit (201 aa).

Residues 13–33 (IIFIIFTILCGGIYTIFITGI) traverse the membrane as a helical segment.

The protein belongs to the KdpC family. The system is composed of three essential subunits: KdpA, KdpB and KdpC.

Its subcellular location is the cell membrane. Its function is as follows. Part of the high-affinity ATP-driven potassium transport (or Kdp) system, which catalyzes the hydrolysis of ATP coupled with the electrogenic transport of potassium into the cytoplasm. This subunit acts as a catalytic chaperone that increases the ATP-binding affinity of the ATP-hydrolyzing subunit KdpB by the formation of a transient KdpB/KdpC/ATP ternary complex. The chain is Potassium-transporting ATPase KdpC subunit from Clostridium botulinum (strain Alaska E43 / Type E3).